Consider the following 883-residue polypeptide: Phosphoenolpyruvate carboxylase (883 aa).

Catalysis depends on residues histidine 138 and lysine 546.

It belongs to the PEPCase type 1 family. The cofactor is Mg(2+).

The enzyme catalyses oxaloacetate + phosphate = phosphoenolpyruvate + hydrogencarbonate. Functionally, forms oxaloacetate, a four-carbon dicarboxylic acid source for the tricarboxylic acid cycle. The sequence is that of Phosphoenolpyruvate carboxylase from Escherichia coli O7:K1 (strain IAI39 / ExPEC).